Consider the following 389-residue polypeptide: Trans-2-enoyl-CoA reductase [NADH] (389 aa).

Residues 47 to 52 (GASTGY), 73 to 74 (FE), 110 to 111 (DA), and 138 to 139 (LA) each bind NAD(+). Tyrosine 224 contacts substrate. The active-site Proton donor is the tyrosine 234. NAD(+)-binding positions include lysine 243 and 272–274 (LVT).

Belongs to the TER reductase family. In terms of assembly, monomer.

The catalysed reaction is a 2,3-saturated acyl-CoA + NAD(+) = a (2E)-enoyl-CoA + NADH + H(+). Its pathway is lipid metabolism; fatty acid biosynthesis. In terms of biological role, involved in the fatty acid synthesis (FAS II). Catalyzes the reduction of a carbon-carbon double bond in an enoyl moiety that is covalently linked to a coenzyme A (CoA). The polypeptide is Trans-2-enoyl-CoA reductase [NADH] (Clostridium perfringens (strain SM101 / Type A)).